The chain runs to 334 residues: H-2 class I histocompatibility antigen, Q7 alpha chain (334 aa).

Positions 1–21 (MALTMLLLLVAAALTLIETRA) are cleaved as a signal peptide. An alpha-1 region spans residues 22–111 (GQHSLQYFHT…AQSYYNQSKG (90 aa)). The Extracellular portion of the chain corresponds to 22-310 (GQHSLQYFHT…PPYTVSNMAT (289 aa)). An N-linked (GlcNAc...) asparagine glycan is attached at Asn107. An alpha-2 region spans residues 112-203 (GSHTLQWMYG…QLGKETLLRT (92 aa)). Disulfide bonds link Cys122–Cys185 and Cys224–Cys280. Residues 204–295 (DPPKAHVTHH…GLPEPLTLRW (92 aa)) form an alpha-3 region. One can recognise an Ig-like C1-type domain in the interval 206 to 294 (PKAHVTHHPR…EGLPEPLTLR (89 aa)). Asn277 carries N-linked (GlcNAc...) asparagine glycosylation. Residues 296–310 (GRWEPPPYTVSNMAT) form a connecting peptide region. A helical transmembrane segment spans residues 311–332 (IAVVVDLGAVAIIGAVVAFVMN).

This sequence belongs to the MHC class I family. Heterodimer of an alpha chain and a beta chain (beta-2-microglobulin).

It is found in the membrane. Involved in the presentation of foreign antigens to the immune system. This Mus musculus (Mouse) protein is H-2 class I histocompatibility antigen, Q7 alpha chain (H2-Q7).